The primary structure comprises 139 residues: Transcription antitermination protein NusB (139 aa).

The protein belongs to the NusB family.

Involved in transcription antitermination. Required for transcription of ribosomal RNA (rRNA) genes. Binds specifically to the boxA antiterminator sequence of the ribosomal RNA (rrn) operons. This is Transcription antitermination protein NusB from Lactiplantibacillus plantarum (strain ATCC BAA-793 / NCIMB 8826 / WCFS1) (Lactobacillus plantarum).